The following is a 534-amino-acid chain: Probable cytochrome c oxidase subunit 1 (534 aa).

A run of 8 helical transmembrane segments spans residues 35-55 (IMYIIFAIFAGVVGGLFSLLF), 76-96 (VLITVHAIIMVFFMIMPALFS), 97-117 (GFGNYFVPLLIGAPDMAFPRL), 120-140 (ISFWLLIPAFLLLISSTFIDG), 165-185 (VAIFSLHLTGLSSILGSINLI), 202-222 (PLFVWSILVTAFLIILAMPVL), 254-274 (LFWFFGHPEVYIVILPGFGIV), and 286-306 (IFGYQGMVGAMVIIGFVGFIV). His-81 is a Fe(II)-heme a binding site. The Cu cation site is built by His-260 and Tyr-264. A cross-link (1'-histidyl-3'-tyrosine (His-Tyr)) is located at residues 260-264 (HPEVY). Cu cation-binding residues include His-309 and His-310. The next 2 helical transmembrane spans lie at 320-340 (ALIYFTAGTMIIAVPTGIKIF) and 357-377 (MLFAIGFIILFTIGGVTGIIL). Residue His-395 participates in heme a3 binding. Transmembrane regions (helical) follow at residues 396–416 (FHYTMSLGALFTAFAGFYYWF), 433–453 (FWITFIGVNLTFFPQHFLGLA), and 475–495 (IGAGISIFAAFYFVFIVFYTL). His-397 lines the Fe(II)-heme a pocket.

Belongs to the heme-copper respiratory oxidase family.

Its subcellular location is the cell membrane. The catalysed reaction is 4 Fe(II)-[cytochrome c] + O2 + 8 H(+)(in) = 4 Fe(III)-[cytochrome c] + 2 H2O + 4 H(+)(out). Its pathway is energy metabolism; oxidative phosphorylation. Its function is as follows. Cytochrome c oxidase is the component of the respiratory chain that catalyzes the reduction of oxygen to water. Subunits 1-3 form the functional core of the enzyme complex. CO I is the catalytic subunit of the enzyme. Electrons originating in cytochrome c are transferred via the copper A center of subunit 2 and heme A of subunit 1 to the bimetallic center formed by heme A3 and copper B. This chain is Probable cytochrome c oxidase subunit 1 (ctaD), found in Rickettsia prowazekii (strain Madrid E).